A 434-amino-acid polypeptide reads, in one-letter code: Trigger factor (434 aa).

In terms of domain architecture, PPIase FKBP-type spans 160-245 (GDKAKINFVG…LNEVQAANLP (86 aa)).

The protein belongs to the FKBP-type PPIase family. Tig subfamily.

The protein resides in the cytoplasm. It carries out the reaction [protein]-peptidylproline (omega=180) = [protein]-peptidylproline (omega=0). Involved in protein export. Acts as a chaperone by maintaining the newly synthesized protein in an open conformation. Functions as a peptidyl-prolyl cis-trans isomerase. This is Trigger factor from Shewanella halifaxensis (strain HAW-EB4).